A 941-amino-acid polypeptide reads, in one-letter code: Translation initiation factor IF-2 (941 aa).

Residues 170–209 (DAQKAEVDAQKAEAEKPVEVKADESAIEEKKRVAAEESKK) show a composition bias toward basic and acidic residues. Disordered regions lie at residues 170 to 228 (DAQK…KAAA) and 252 to 351 (RAIK…SNFQ). The segment covering 256-269 (APEPVAPVAKPAAE) has biased composition (low complexity). The segment covering 271–297 (TLHKPADKKPGEKKDEKKPAVTADKKS) has biased composition (basic and acidic residues). Residues 299–308 (KSANVSSTWQ) show a composition bias toward polar residues. Residues 441 to 610 (PRAPVVTVMG…LLQAEVLELK (170 aa)) form the tr-type G domain. Residues 450 to 457 (GHVDHGKT) form a G1 region. 450-457 (GHVDHGKT) is a binding site for GTP. The tract at residues 475-479 (GITQH) is G2. The G3 stretch occupies residues 496-499 (DTPG). GTP is bound by residues 496 to 500 (DTPGH) and 550 to 553 (NKID). Residues 550 to 553 (NKID) are G4. Positions 586–588 (SAK) are G5.

This sequence belongs to the TRAFAC class translation factor GTPase superfamily. Classic translation factor GTPase family. IF-2 subfamily.

It is found in the cytoplasm. One of the essential components for the initiation of protein synthesis. Protects formylmethionyl-tRNA from spontaneous hydrolysis and promotes its binding to the 30S ribosomal subunits. Also involved in the hydrolysis of GTP during the formation of the 70S ribosomal complex. In Herminiimonas arsenicoxydans, this protein is Translation initiation factor IF-2.